Here is a 202-residue protein sequence, read N- to C-terminus: Protein DCV1 (202 aa).

An N-terminal signal peptide occupies residues 1–18 (MLNYKLILLFSSFLQLIS). Helical transmembrane passes span 91–107 (IGGLLISIPVATCLTFI), 137–155 (ILTLLSTIFACTVILLLCM), and 168–189 (LVWLANCSLFPLLVIGVHFLSF).

The protein resides in the membrane. The chain is Protein DCV1 (DCV1) from Saccharomyces cerevisiae (strain ATCC 204508 / S288c) (Baker's yeast).